A 520-amino-acid polypeptide reads, in one-letter code: Cytochrome P450 monooxygenase vrtE (520 aa).

The helical transmembrane segment at Ala-16–Leu-36 threads the bilayer. N-linked (GlcNAc...) asparagine glycosylation occurs at Asn-137. Cys-459 is a binding site for heme.

It belongs to the cytochrome P450 family. Requires heme as cofactor.

The protein resides in the membrane. Its pathway is secondary metabolite biosynthesis; terpenoid biosynthesis. Functionally, cytochrome P450 monooxygenase; part of the gene cluster that mediates the biosynthesis of viridicatumtoxin, a tetracycline-like fungal meroterpenoid with a unique, fused spirobicyclic ring system. The first step of the pathway is the production of the malonamoyl-CoA starter unit for the polyketide synthase vrtA. The aldolase vrtJ may be involved in the synthesis of the malonamate substrate for malonamoyl-CoA synthetase vrtB. The polyketide synthase vrtA then may utilize the malonamoyl-CoA starter unit, followed by sequential condensation of eight malonyl-CoA units to form the polyketide backbone. The cyclization of the last ring could be mediated by the lactamase-like protein vrtG. The proposed post-PKS tailoring steps are a hydroxylation at C5 catalyzed the cytochrome P450 monooxygenase vrtE, a hydroxylation at C12a catalyzed by VrtH and/or VrtI, and an O-methylation by the O-methyltransferase vrtF. VrtC is then proposed to catalyze the transfer of a geranyl group synthesized by vrtD to the aromatic C ring of the tetracyclic polyketide intermediate of viridicatumtoxin to yield previridicatumtoxin. Finally, the cytochrome P450 monooxygenase vrtK catalyzes the spirocyclization of the geranyl moiety of previridicatumtoxin to afford viridicatumtoxin. The protein is Cytochrome P450 monooxygenase vrtE of Penicillium aethiopicum.